The chain runs to 1358 residues: MGEAAAVVAVNGERYEAVGVDPSMTLLEFLRTRTPFRGPKLGCGEGGCGACAVVVSKYDAAADEVTSFSASSCLTLLGSLHHCAVTTSEGIGNSRDGFHPVQRRLAGFHASQCGFCTPGMCVSIFSALANADRAASAAPPPPPTPPGFSRLTAADAERAVSGNLCRCTGYRPILDACKSFAADVDLEDLGLNSFWKKGERADITKLPAYSCTADVATFPEFLKSEIRSSGGAPAVAVTGDGCWFHPRSIEEFHRLFECNLFDEMSVKIVASNTGSGVYKDQDLHDKYINISQIPELSAINRSSNGIEIGAAVSISKAIEILRSDGGDAVVFRKIAYHLGKVASPFVRNTATIGGNIIMAQRMSFPSDIATVLLAAGSTVTIQQVASKRMCLTLEEFLKQPPCDSRTLLISISIPDWCSYDGITFETFRAAPRPFGNAVSYVNSAFLARSSLDAASGSHLIEDVRLAFGAFGSEHAIRASKVEEFLKGKLVSASVILEAVRLLKGVVSPAEGTTHPEYRVSLAVSYLFRFLSSLANGLDDKPENANNVPNGSCTTNGTTNGSAESTVDSFDLPIKSRQEMVFSDEYKPVGKPIKKVGAELQASGEAVYVDDIPAPKDCLYGAFIYSTHPHAHIKGVNFRSSLASQKVITVITAKDIPTGGENVGSCFPMLGDEALFADPVAEFAGQNIGVVIAETQKYAYMAARQAVIEYNTENLQPPILTVEDAVQHNSYFQVPPFLQPKPIGDFNQAMSEADHKIIDGEVKLGSQYYFYMETQTALAFPDEDNCITVYCSAQMPEVTQDIVARCLGVPFHNVRIITRRVGGGFGGKAMKATHVATACAVAAFKLRRPVRMYLDRKTDMIMAGGRHPMKAKYSVGFKSDGKITALHLDLKINAGISPEFSPAIPYAIVGALKKYSWGALAFDIKVCKTNVSSKSAMRAPGDAQGSFIAEAIVEHVASTLSVATNTIRRKNLHDLESLKVFFGDSAAGEASTSSYSLVIIFDRLASTPEYQRRAAMVEQFNGSSRWKKRGISCVPITYSVTLRPSPGKVSILNDGSIAVEVGGVEIGQGLWTKVKQMTAFALGQLCDDGGEGLLDNVRVIQADTLSMIQGGWTAGSTTSETSCEAVRKSCAALVERLKPIKEKAGTLPWKSFIAQASMASVKLTEHAYWTPDPTFTSYMNYGAATSEVEVDVLTGATTILRSDLVYDCGQSLNPAVDLGQVEGAFVQGVGFFTNEEYATNADGLVIHDGTWTYKIPTVDTIPKQFNVELINTARHHSRVLSSKASGEPPLLLASSVHCAMREAIRAARREFAAVGGGTGGSDQVTSFQMDVPATMPAVKELCGLDVVERYLESFSATTA.

One can recognise a 2Fe-2S ferredoxin-type domain in the interval 4-91 (AAAVVAVNGE…HCAVTTSEGI (88 aa)). [2Fe-2S] cluster-binding residues include cysteine 43, cysteine 48, cysteine 51, and cysteine 73. The region spanning 236-418 (AVTGDGCWFH…ISISIPDWCS (183 aa)) is the FAD-binding PCMH-type domain. Positions 540–567 (KPENANNVPNGSCTTNGTTNGSAESTVD) are disordered. Residues 549-561 (NGSCTTNGTTNGS) are compositionally biased toward low complexity.

It belongs to the xanthine dehydrogenase family. As to quaternary structure, aldehyde oxidases (AO) are homodimers and heterodimers of AO subunits. [2Fe-2S] cluster serves as cofactor. It depends on FAD as a cofactor. Mo-molybdopterin is required as a cofactor.

It catalyses the reaction an aldehyde + O2 + H2O = a carboxylate + H2O2 + H(+). The sequence is that of Probable aldehyde oxidase 1 from Oryza sativa subsp. japonica (Rice).